We begin with the raw amino-acid sequence, 605 residues long: Putative glutaminase 2 (605 aa).

Substrate is bound by residues Ser213, Asn262, Glu308, Asn315, Tyr342, Tyr394, and Val412. ANK repeat units follow at residues 480 to 509 (DRLIPVFHVARAGDLPTMRRLYMQGEDLNT) and 513 to 543 (DDRTVLHIAATEGYETMIKFLVNVAKVDVDK). The span at 569-581 (KAMKRPEQHRKDS) shows a compositional bias: basic and acidic residues. Residues 569-605 (KAMKRPEQHRKDSVSSLDTDDEIDDDGFPEKPSFTID) form a disordered region. Acidic residues predominate over residues 586-595 (DTDDEIDDDG).

The protein belongs to the glutaminase family.

It carries out the reaction L-glutamine + H2O = L-glutamate + NH4(+). This is Putative glutaminase 2 (glna-2) from Caenorhabditis elegans.